A 439-amino-acid polypeptide reads, in one-letter code: MDHLAHHYHAHIAELNRRVAEIVSREALSGLVIHSGQPHRMFLDDINYPFKANPHFKAWLPVLDNPNCWLVVNGRDKPQLIFYRPVDFWHKVSDVPEMFWTEHFEIKLLTKADKVAELLPSDITNWAYLGEHLDVAEVLGFTSRNPDSVMSYLHFHRTTKTEYELECMRRANQIAVQGHLAAKNAFYNGASEFEIQQQYLSAVGQGDNEVPYGNIIALNQNAAILHYTALEHQNPARRLSFLIDAGASYFGYASDITRTYAFEKNRFDELITAMNKAQLELIDMMRPGVRYPDLHLATHGKVAQMLLDFELATGDAQGLVDQGITSAFFPHGLGHMLGLQVHDVGGFSFDERGTHIPAPEAHPFLRCTRILAPNQVLTMEPGLYIIDTLLNELKQDSRGQQINWRTVDELRPFGGIRIEDNVIVHQDRNENMTRELGLA.

Mn(2+) is bound by residues D244, D255, H335, E380, and E419.

This sequence belongs to the peptidase M24B family. Bacterial-type prolidase subfamily. Requires Mn(2+) as cofactor.

The catalysed reaction is Xaa-L-Pro dipeptide + H2O = an L-alpha-amino acid + L-proline. In terms of biological role, splits dipeptides with a prolyl residue in the C-terminal position. This chain is Xaa-Pro dipeptidase, found in Shewanella sp. (strain MR-7).